We begin with the raw amino-acid sequence, 256 residues long: Short chain dehydrogenase adrF (256 aa).

NADP(+) is bound by residues Ile11, Asp57, Arg119, Tyr151, Lys155, and Val184. Catalysis depends on Tyr151, which acts as the Proton acceptor. Lys155 acts as the Lowers pKa of active site Tyr in catalysis.

This sequence belongs to the short-chain dehydrogenases/reductases (SDR) family.

It functions in the pathway secondary metabolite biosynthesis; terpenoid biosynthesis. Its function is as follows. Short chain dehydrogenase; part of the gene cluster that mediates the biosynthesis of andrastins, meroterpenoid compounds that exhibit inhibitory activity against ras farnesyltransferase, suggesting that they could be promising leads for antitumor agents. The first step of the pathway is the synthesis of 3,5-dimethylorsellinic acid (DMOA) by the polyketide synthase adrD via condensation of one acetyl-CoA starter unit with 3 malonyl-CoA units and 2 methylations. DMAO is then converted to farnesyl-DMAO by the prenyltransferase adrG. The methyltransferase adrK catalyzes the methylation of the carboxyl group of farnesyl-DMAO to farnesyl-DMAO methyl ester which is further converted to epoxyfarnesyl-DMAO methyl ester by the FAD-dependent monooxygenase adrH. The terpene cyclase adrI then catalyzes the carbon skeletal rearrangement to generate the andrastin E, the first compound in the pathway having the andrastin scaffold, with the tetracyclic ring system. The post-cyclization tailoring enzymes adrF, adrE, adrJ, and adrA, are involved in the conversion of andrastin E into andrastin A. The short chain dehydrogenase adrF is responsible for the oxidation of the C-3 a hydroxyl group of andrastin E to yield the corresponding ketone, andrastin D. The ketoreductase adrE stereoselectively reduces the carbonyl moiety to reverse the stereochemistry of the C-3 position to yield andrastin F. The acetyltransferase adrJ is the acetyltransferase that attaches the acetyl group to the C-3 hydroxyl group of andrastin F to yield andrastin C. Finally, the cytochrome P450 monooxygenase adrA catalyzes two sequential oxidation reactions of the C-23 methyl group, to generate the corresponding alcohol andrastin B, and aldehyde andrastin A. This Penicillium roqueforti protein is Short chain dehydrogenase adrF.